Here is a 378-residue protein sequence, read N- to C-terminus: Queuine tRNA-ribosyltransferase (378 aa).

The active-site Proton acceptor is Asp-89. Substrate contacts are provided by residues 89–93 (DSGGF), Asp-143, Gln-187, and Gly-214. The RNA binding stretch occupies residues 245 to 251 (GVGKPQD). The Nucleophile role is filled by Asp-264. The tract at residues 269-273 (TRNAR) is RNA binding; important for wobble base 34 recognition. 4 residues coordinate Zn(2+): Cys-302, Cys-304, Cys-307, and His-334.

It belongs to the queuine tRNA-ribosyltransferase family. As to quaternary structure, homodimer. Within each dimer, one monomer is responsible for RNA recognition and catalysis, while the other monomer binds to the replacement base PreQ1. It depends on Zn(2+) as a cofactor.

It carries out the reaction 7-aminomethyl-7-carbaguanine + guanosine(34) in tRNA = 7-aminomethyl-7-carbaguanosine(34) in tRNA + guanine. It functions in the pathway tRNA modification; tRNA-queuosine biosynthesis. In terms of biological role, catalyzes the base-exchange of a guanine (G) residue with the queuine precursor 7-aminomethyl-7-deazaguanine (PreQ1) at position 34 (anticodon wobble position) in tRNAs with GU(N) anticodons (tRNA-Asp, -Asn, -His and -Tyr). Catalysis occurs through a double-displacement mechanism. The nucleophile active site attacks the C1' of nucleotide 34 to detach the guanine base from the RNA, forming a covalent enzyme-RNA intermediate. The proton acceptor active site deprotonates the incoming PreQ1, allowing a nucleophilic attack on the C1' of the ribose to form the product. After dissociation, two additional enzymatic reactions on the tRNA convert PreQ1 to queuine (Q), resulting in the hypermodified nucleoside queuosine (7-(((4,5-cis-dihydroxy-2-cyclopenten-1-yl)amino)methyl)-7-deazaguanosine). This is Queuine tRNA-ribosyltransferase from Blochmanniella floridana.